We begin with the raw amino-acid sequence, 194 residues long: Cysteine and glycine-rich protein 2 (194 aa).

The LIM zinc-binding 1 domain maps to 10-61 (CGACGRTVYHAEEVQCDGRSFHRCCFLCMVCRKNLDSTTVAIHDAEVYCKSC). A Nuclear localization signal motif is present at residues 64–69 (KKYGPK). The disordered stretch occupies residues 85–110 (GERLGIKPESSPSPHRPTTNPNTSKF). The segment covering 94-110 (SSPSPHRPTTNPNTSKF) has biased composition (polar residues). An LIM zinc-binding 2 domain is found at 120–171 (CSRCGDSVYAAEKVIGAGKPWHKNCFRCAKCGKSLESTTLTEKEGEIYCKGC).

It localises to the nucleus. In terms of biological role, interacts with zyxin. May be a component of a signal transduction pathway that mediates adhesion-stimulated changes in gene expression. Totally down-regulated in transformed cells. In Coturnix japonica (Japanese quail), this protein is Cysteine and glycine-rich protein 2 (CSRP2).